We begin with the raw amino-acid sequence, 285 residues long: RNA polymerase sigma factor RpoH (285 aa).

The tract at residues 53 to 122 (LILSHLRFVV…IHEYVLRNWR (70 aa)) is sigma-70 factor domain-2. The Interaction with polymerase core subunit RpoC motif lies at 77-80 (DLIQ). The tract at residues 229–281 (AMEGLDERSQDIIRARWLDEDNKSTLQELADRYGVSAERVRQLEKNAMKKLRA) is sigma-70 factor domain-4. The H-T-H motif DNA-binding region spans 254–273 (LQELADRYGVSAERVRQLEK).

This sequence belongs to the sigma-70 factor family. RpoH subfamily. As to quaternary structure, interacts with the RNA polymerase core enzyme.

It localises to the cytoplasm. In terms of biological role, sigma factors are initiation factors that promote the attachment of RNA polymerase to specific initiation sites and are then released. This sigma factor is involved in regulation of expression of heat shock genes. This chain is RNA polymerase sigma factor RpoH, found in Enterobacter cloacae.